The primary structure comprises 631 residues: RING finger protein 112 (631 aa).

Residues 57–98 (CSICLERLRDPISLDCGHDFCIRCFSTHRLPGCEPPCCPECR) form an RING-type zinc finger. The tract at residues 131 to 631 (PVRAEPLLLV…GDREPLLQEE (501 aa)) is interaction with ZBTB16. In terms of domain architecture, GB1/RHD3-type G spans 166–397 (DTPVCLLAVL…YVSDVLSAAP (232 aa)). Position 318–319 (318–319 (RD)) interacts with GTP. Transmembrane regions (helical) follow at residues 547–567 (LAAVGGAVGAGLMGLAGGVVG) and 580–600 (GMVAAGAAVGATGAAVVGGGV).

It belongs to the TRAFAC class dynamin-like GTPase superfamily. GB1/RHD3 GTPase family. GB1 subfamily. In terms of assembly, self-associates. Interacts with SP1 in an oxidative stress-regulated manner. Interacts with SIGMAR1 in an oxidative stress-regulated manner. Interacts with ZBTB16 (via C2H2-type zinc finger domains 1 and 2). Auto-ubiquitinated. In terms of tissue distribution, predominantly expressed in brain. Decreased expression in glioma brain tumors as compared to normal brains (at protein level).

It localises to the membrane. The protein localises to the cytoplasm. The protein resides in the nucleus. It is found in the nuclear body. Its subcellular location is the nucleoplasm. It localises to the endosome. The protein localises to the cytoplasmic vesicle. The protein resides in the secretory vesicle. It is found in the synaptic vesicle. Its subcellular location is the postsynaptic density. It localises to the perikaryon. The protein localises to the cell projection. The protein resides in the neuron projection. The enzyme catalyses S-ubiquitinyl-[E2 ubiquitin-conjugating enzyme]-L-cysteine + [acceptor protein]-L-lysine = [E2 ubiquitin-conjugating enzyme]-L-cysteine + N(6)-ubiquitinyl-[acceptor protein]-L-lysine.. It participates in protein modification; protein ubiquitination. Functionally, E3 ubiquitin-protein ligase that plays an important role in neuronal differentiation, including neurogenesis and gliogenesis, during brain development. During embryonic development initiates neuronal differentiation by inducing cell cycle arrest at the G0/G1 phase through up-regulation of cell-cycle regulatory proteins. Plays a role not only in the fetal period during the development of the nervous system, but also in the adult brain, where it is involved in the maintenance of neural functions and protection of the nervous tissue cells from oxidative stress-induced damage. Exhibits GTPase and E3 ubiquitin-protein ligase activities. Regulates dendritic spine density and synaptic neurotransmission; its ability to hydrolyze GTP is involved in the maintenance of dendritic spine density. This is RING finger protein 112 (RNF112) from Homo sapiens (Human).